A 253-amino-acid chain; its full sequence is Imidazole glycerol phosphate synthase subunit HisF (253 aa).

Catalysis depends on residues aspartate 11 and aspartate 130.

The protein belongs to the HisA/HisF family. As to quaternary structure, heterodimer of HisH and HisF.

Its subcellular location is the cytoplasm. The enzyme catalyses 5-[(5-phospho-1-deoxy-D-ribulos-1-ylimino)methylamino]-1-(5-phospho-beta-D-ribosyl)imidazole-4-carboxamide + L-glutamine = D-erythro-1-(imidazol-4-yl)glycerol 3-phosphate + 5-amino-1-(5-phospho-beta-D-ribosyl)imidazole-4-carboxamide + L-glutamate + H(+). It participates in amino-acid biosynthesis; L-histidine biosynthesis; L-histidine from 5-phospho-alpha-D-ribose 1-diphosphate: step 5/9. In terms of biological role, IGPS catalyzes the conversion of PRFAR and glutamine to IGP, AICAR and glutamate. The HisF subunit catalyzes the cyclization activity that produces IGP and AICAR from PRFAR using the ammonia provided by the HisH subunit. This chain is Imidazole glycerol phosphate synthase subunit HisF, found in Ruegeria pomeroyi (strain ATCC 700808 / DSM 15171 / DSS-3) (Silicibacter pomeroyi).